The following is a 536-amino-acid chain: CRISPR-associated DNA-binding protein Cas12m (536 aa).

The segment at 1–59 (MPFGKKARHVKAYQFGADAPQEGMEAVLEQHRLRTDYYNALVEMELRQREERTALLANL) is recognition domain (REC1-N). Residues 60–105 (AAESGLESPNQVYERLKAAGEKGIRKHPEYVAARERQKALYGHPRL) form a recognition domain (REC2) region. The interval 106–159 (LELQSRQREERNALRRSFGAKGLYSSNYLDVERAFDKARQSPELRFRRYSPHEG) is recognition domain (REC1-C). Residues 160 to 257 (RLAVLYTEGL…RWTVSVVVEV (98 aa)) form a wedge domain (WED) region. The interval 258–270 (EGPPVASPTGRGA) is linker. Residues 271–481 (VAVDLGWRRV…QRGKPVRKLN (211 aa)) form a ruvC-I region. Positions 482–516 (PAHTTTDCHACGGALVGDPAKELRLYCPTCERFYD) are target nucleic-acid binding (TNB). 4 residues coordinate Zn(2+): cysteine 489, cysteine 492, cysteine 508, and cysteine 511. The segment at 517-536 (QDENAARNLLRRAQEVQAQV) is ruvC-II. Aspartate 518 provides a ligand contact to Mg(2+).

It belongs to the CRISPR-associated DNA-binding protein Cas12m family. Mg(2+) serves as cofactor. It depends on Zn(2+) as a cofactor.

With respect to regulation, pre-crRNA processing is inhibited by EDTA. CRISPR (clustered regularly interspaced short palindromic repeat), is an adaptive immune system that provides protection against mobile genetic elements (viruses, transposable elements and conjugative plasmids). CRISPR clusters contain sequences complementary to antecedent mobile elements and target invading nucleic acids. CRISPR clusters are transcribed and processed into CRISPR RNA (crRNA). Recognizes a short motif in the CRISPR repeat sequences (the 5' PAM or protospacer adjacent motif, 5'-TT/CN-3' in this organism) to help distinguish self versus nonself, as targets within the bacterial CRISPR locus do not have PAMs. Cas12m-crRNA binds DNA in a PAM-dependent, crRNA-guided fashion. DNA-binding probably inhibits transcription, leading to gene silencing. No dsDNA, ssDNA or RNA nuclease activity is seen for the crRNA-Cas12m complex. Upon expression in E.coli as a CRISPR region preferentially binds to its associated crRNA. Is required to process pre-crRNA to mature crRNA without a tracrRNA; processing is Mg(2+)-dependent and does not require the predicted RuvC domain catalytic site. The sequence is that of CRISPR-associated DNA-binding protein Cas12m from Allomeiothermus silvanus (strain ATCC 700542 / DSM 9946 / NBRC 106475 / NCIMB 13440 / VI-R2) (Thermus silvanus).